Reading from the N-terminus, the 67-residue chain is Prokaryotic ubiquitin-like protein Pup (67 aa).

Residues 1-11 (MAGQEQQQPQS) are compositionally biased toward low complexity. The disordered stretch occupies residues 1–47 (MAGQEQQQPQSRESEFEDDAPATPPAPGEAQASAATQGVDDLLDEID). An ARC ATPase binding region spans residues 25–61 (PAPGEAQASAATQGVDDLLDEIDGVLESNAEEFVRAF). The residue at position 67 (Gln-67) is a Deamidated glutamine. Residue Gln-67 forms an Isoglutamyl lysine isopeptide (Gln-Lys) (interchain with K-? in acceptor proteins) linkage.

It belongs to the prokaryotic ubiquitin-like protein family. As to quaternary structure, strongly interacts with the proteasome-associated ATPase ARC through a hydrophobic interface; the interacting region of Pup lies in its C-terminal half. There is one Pup binding site per ARC hexamer ring. Is modified by deamidation of its C-terminal glutamine to glutamate by the deamidase Dop, a prerequisite to the subsequent pupylation process.

The protein operates within protein degradation; proteasomal Pup-dependent pathway. Protein modifier that is covalently attached to lysine residues of substrate proteins, thereby targeting them for proteasomal degradation. The tagging system is termed pupylation. The protein is Prokaryotic ubiquitin-like protein Pup of Arthrobacter sp. (strain FB24).